The chain runs to 150 residues: Large ribosomal subunit protein bL9 (150 aa).

The protein belongs to the bacterial ribosomal protein bL9 family.

Its function is as follows. Binds to the 23S rRNA. The sequence is that of Large ribosomal subunit protein bL9 from Streptococcus pyogenes serotype M3 (strain SSI-1).